The primary structure comprises 572 residues: Proline--tRNA ligase (572 aa).

It belongs to the class-II aminoacyl-tRNA synthetase family. ProS type 1 subfamily. In terms of assembly, homodimer.

The protein resides in the cytoplasm. It carries out the reaction tRNA(Pro) + L-proline + ATP = L-prolyl-tRNA(Pro) + AMP + diphosphate. Catalyzes the attachment of proline to tRNA(Pro) in a two-step reaction: proline is first activated by ATP to form Pro-AMP and then transferred to the acceptor end of tRNA(Pro). As ProRS can inadvertently accommodate and process non-cognate amino acids such as alanine and cysteine, to avoid such errors it has two additional distinct editing activities against alanine. One activity is designated as 'pretransfer' editing and involves the tRNA(Pro)-independent hydrolysis of activated Ala-AMP. The other activity is designated 'posttransfer' editing and involves deacylation of mischarged Ala-tRNA(Pro). The misacylated Cys-tRNA(Pro) is not edited by ProRS. In Serratia proteamaculans (strain 568), this protein is Proline--tRNA ligase.